The sequence spans 281 residues: Deoxyribonuclease-1 (281 aa).

Residues 1 to 21 form the signal peptide; it reads MRSEMLTALLTLAVLLQVAGS. The N-linked (GlcNAc...) asparagine glycan is linked to asparagine 39. Glutamate 99 is an active-site residue. A disulfide bond links cysteine 122 and cysteine 125. Histidine 155 is an active-site residue.

It belongs to the DNase I family. Requires Ca(2+) as cofactor. It depends on Mg(2+) as a cofactor. As to expression, equivalent levels in pancreas and parotid gland, low amounts in kidney, liver, small intestine, stomach and thymus.

Its subcellular location is the secreted. It is found in the zymogen granule. It localises to the nucleus envelope. The enzyme catalyses Endonucleolytic cleavage to 5'-phosphodinucleotide and 5'-phosphooligonucleotide end-products.. In terms of biological role, serum endocuclease secreted into body fluids by a wide variety of exocrine and endocrine organs. Expressed by non-hematopoietic tissues and preferentially cleaves protein-free DNA. Among other functions, seems to be involved in cell death by apoptosis. Binds specifically to G-actin and blocks actin polymerization. Preferentially attacks double-stranded DNA and produces oligonucleotides with 5'-phospho and 3'-hydroxy termini. Together with DNASE1L3, plays a key role in degrading neutrophil extracellular traps (NETs). NETs are mainly composed of DNA fibers and are released by neutrophils to bind pathogens during inflammation. Degradation of intravascular NETs by DNASE1 and DNASE1L3 is required to prevent formation of clots that obstruct blood vessels and cause organ damage following inflammation. The polypeptide is Deoxyribonuclease-1 (DNASE1) (Oryctolagus cuniculus (Rabbit)).